We begin with the raw amino-acid sequence, 180 residues long: MSSQKSSHHKADSKMEQDNNRKAWISQPSGLNFVWGGDSRYWVIPKEPRMPAELKMVSWLEVTGSFDKIEPGKTYRIGFKISFKPDATGWDKAPVFMSAKIGKKGKTVWKRIKSVSQNFGILKGGSEPVNIPDESDGLFEILVSPTALNQDTKLQFGLYEVWTGRWKTGLLIHEAFVQEV.

The tract at residues 1-21 (MSSQKSSHHKADSKMEQDNNR) is disordered. Basic and acidic residues predominate over residues 9–21 (HKADSKMEQDNNR).

This chain is Protein PHLOEM PROTEIN 2-LIKE A9 (PP2A9), found in Arabidopsis thaliana (Mouse-ear cress).